Reading from the N-terminus, the 418-residue chain is MAAVIVLAAGGGTRMKSTKSKLLHEVAGRPMLSWAIGAARGLNPEHLVVVVGHRREQVEAHLAEDAPDVTTAVQAEQKGTGHAVACGLEGLDELHGEVVVTYGDVPMLTGETLQRMVEVHRERRNLVTVLTAEVEDPTGYGRILRGGEAVVGIVEHKDADEAQRAVREINSGIYVFDAEALREGVSKLSNDNVQGEYYLTDVVTMAADGTVEVPGRGRVGAFRIDDVWQTEGVNDRVQLARMNAEVNRRIVTGWMRAGVTIIDPTSTWIQPDVDLANDVTLYPGVFLNGATTIGAGATVGPDVTVTDSEIREEATVTRSEVTLAVVGEGVRVGPFSNIRPGSVLDRDAKVGAFVETKNTHIGTEAAIPHMAYVGDSEVTAGSSIVAGSVLSRECAAPATVSDITSDSQDDTLNPEADQ.

The tract at residues 1–236 is pyrophosphorylase; that stretch reads MAAVIVLAAG…VWQTEGVNDR (236 aa). UDP-N-acetyl-alpha-D-glucosamine-binding positions include 7-10, K21, Q74, 79-80, 102-104, G141, E155, N170, and N234; these read LAAG, GT, and YGD. D104 is a binding site for Mg(2+). N234 serves as a coordination point for Mg(2+). The linker stretch occupies residues 237–257; it reads VQLARMNAEVNRRIVTGWMRA. An N-acetyltransferase region spans residues 258-418; that stretch reads GVTIIDPTST…DDTLNPEADQ (161 aa). UDP-N-acetyl-alpha-D-glucosamine-binding residues include R339 and K357. The active-site Proton acceptor is the H369. Y372 contributes to the UDP-N-acetyl-alpha-D-glucosamine binding site. An acetyl-CoA-binding site is contributed by A386.

In the N-terminal section; belongs to the N-acetylglucosamine-1-phosphate uridyltransferase family. The protein in the C-terminal section; belongs to the transferase hexapeptide repeat family. As to quaternary structure, homotrimer. Mg(2+) serves as cofactor.

It is found in the cytoplasm. It carries out the reaction alpha-D-glucosamine 1-phosphate + acetyl-CoA = N-acetyl-alpha-D-glucosamine 1-phosphate + CoA + H(+). The enzyme catalyses N-acetyl-alpha-D-glucosamine 1-phosphate + UTP + H(+) = UDP-N-acetyl-alpha-D-glucosamine + diphosphate. It functions in the pathway nucleotide-sugar biosynthesis; UDP-N-acetyl-alpha-D-glucosamine biosynthesis; N-acetyl-alpha-D-glucosamine 1-phosphate from alpha-D-glucosamine 6-phosphate (route II): step 2/2. Its pathway is nucleotide-sugar biosynthesis; UDP-N-acetyl-alpha-D-glucosamine biosynthesis; UDP-N-acetyl-alpha-D-glucosamine from N-acetyl-alpha-D-glucosamine 1-phosphate: step 1/1. It participates in bacterial outer membrane biogenesis; LPS lipid A biosynthesis. Functionally, catalyzes the last two sequential reactions in the de novo biosynthetic pathway for UDP-N-acetylglucosamine (UDP-GlcNAc). The C-terminal domain catalyzes the transfer of acetyl group from acetyl coenzyme A to glucosamine-1-phosphate (GlcN-1-P) to produce N-acetylglucosamine-1-phosphate (GlcNAc-1-P), which is converted into UDP-GlcNAc by the transfer of uridine 5-monophosphate (from uridine 5-triphosphate), a reaction catalyzed by the N-terminal domain. The chain is Bifunctional protein GlmU from Cutibacterium acnes (strain DSM 16379 / KPA171202) (Propionibacterium acnes).